We begin with the raw amino-acid sequence, 123 residues long: Large ribosomal subunit protein uL29 (123 aa).

This sequence belongs to the universal ribosomal protein uL29 family. As to quaternary structure, component of the large ribosomal subunit.

Its subcellular location is the cytoplasm. In terms of biological role, component of the large ribosomal subunit. The ribosome is a large ribonucleoprotein complex responsible for the synthesis of proteins in the cell. Plays an essential role in early embryonic development. May act as a haploinsufficient tumor suppressor. The chain is Large ribosomal subunit protein uL29 (rpl35) from Danio rerio (Zebrafish).